A 173-amino-acid polypeptide reads, in one-letter code: Crossover junction endodeoxyribonuclease RuvC (173 aa).

Catalysis depends on residues Asp8, Glu67, and Asp139. The Mg(2+) site is built by Asp8, Glu67, and Asp139.

This sequence belongs to the RuvC family. As to quaternary structure, homodimer which binds Holliday junction (HJ) DNA. The HJ becomes 2-fold symmetrical on binding to RuvC with unstacked arms; it has a different conformation from HJ DNA in complex with RuvA. In the full resolvosome a probable DNA-RuvA(4)-RuvB(12)-RuvC(2) complex forms which resolves the HJ. Mg(2+) is required as a cofactor.

Its subcellular location is the cytoplasm. The enzyme catalyses Endonucleolytic cleavage at a junction such as a reciprocal single-stranded crossover between two homologous DNA duplexes (Holliday junction).. In terms of biological role, the RuvA-RuvB-RuvC complex processes Holliday junction (HJ) DNA during genetic recombination and DNA repair. Endonuclease that resolves HJ intermediates. Cleaves cruciform DNA by making single-stranded nicks across the HJ at symmetrical positions within the homologous arms, yielding a 5'-phosphate and a 3'-hydroxyl group; requires a central core of homology in the junction. The consensus cleavage sequence is 5'-(A/T)TT(C/G)-3'. Cleavage occurs on the 3'-side of the TT dinucleotide at the point of strand exchange. HJ branch migration catalyzed by RuvA-RuvB allows RuvC to scan DNA until it finds its consensus sequence, where it cleaves and resolves the cruciform DNA. This chain is Crossover junction endodeoxyribonuclease RuvC, found in Baumannia cicadellinicola subsp. Homalodisca coagulata.